The following is a 646-amino-acid chain: MIKITFPDGSVREYNEGVNGLQIAESISSRLAQDVLACGVNGEIYDLGRPINEDASVVLYKWEDEQGKHAFWHTSAHLLAEALQELYPGIQFGIGPAIENGFYYDVDPGEAVIKEADLPAIEAKMAELVAKKEAVVRRDIAKGDALKMFGDRGETYKCELISELEDGHITTYTQGDFTDLCRGPHLMTTAPIKAIKLTSVAGAYWRGHEDRKMLTRIYGITFPKKKMLDEYLALMEEAKKRDHRKIGKEMQLFMFSDTVGKGLPMWLPKGTALRLRLQDFLRRIQTRYDYQEVITPPIGNKLLYVTSGHYAKYGKDAFQPIHTPEEGEEYFLKPMNCPHHCEIYKNFPRSYKDLPLRIAEFGTVCRYEQSGELHGLTRVRSFTQDDAHIFCRPDQVKGEFLRVMDIISIVFRSMDFDNFEAQISLRDKVNREKYIGSDENWEKAEQAIIEACEEKGLKAKIEYGEAAFYGPKLDFMVKDAIGRRWQLGTIQVDYNLPERFELEYMGSDNQKHRPVMIHRAPFGSMERFVAVLIEHTAGKFPLWLTPEQVVILPISEKFNEYAEKVKTYLKMKEIRAIVDDRNEKIGRKIRDNEMKRIPYMLIVGEKEAENGEVSVRRQGEGDKGTMKFEEFGEILNEEVQNMINKW.

The 61-residue stretch at 1–61 (MIKITFPDGS…NEDASVVLYK (61 aa)) folds into the TGS domain. Residues 242–541 (DHRKIGKEMQ…LIEHTAGKFP (300 aa)) are catalytic. Residues cysteine 337, histidine 388, and histidine 518 each coordinate Zn(2+).

The protein belongs to the class-II aminoacyl-tRNA synthetase family. Homodimer. It depends on Zn(2+) as a cofactor.

It localises to the cytoplasm. The enzyme catalyses tRNA(Thr) + L-threonine + ATP = L-threonyl-tRNA(Thr) + AMP + diphosphate + H(+). Functionally, catalyzes the attachment of threonine to tRNA(Thr) in a two-step reaction: L-threonine is first activated by ATP to form Thr-AMP and then transferred to the acceptor end of tRNA(Thr). Also edits incorrectly charged L-seryl-tRNA(Thr). This is Threonine--tRNA ligase from Bacteroides fragilis (strain YCH46).